Here is a 426-residue protein sequence, read N- to C-terminus: Glutamate-1-semialdehyde 2,1-aminomutase (426 aa).

Lys265 is modified (N6-(pyridoxal phosphate)lysine).

This sequence belongs to the class-III pyridoxal-phosphate-dependent aminotransferase family. HemL subfamily. As to quaternary structure, homodimer. Pyridoxal 5'-phosphate serves as cofactor.

The protein localises to the cytoplasm. The enzyme catalyses (S)-4-amino-5-oxopentanoate = 5-aminolevulinate. It participates in porphyrin-containing compound metabolism; protoporphyrin-IX biosynthesis; 5-aminolevulinate from L-glutamyl-tRNA(Glu): step 2/2. This chain is Glutamate-1-semialdehyde 2,1-aminomutase, found in Salmonella schwarzengrund (strain CVM19633).